We begin with the raw amino-acid sequence, 76 residues long: KANTR integral membrane protein (76 aa).

The first 25 residues, 1–25, serve as a signal peptide directing secretion; the sequence is MSPFSLLILVICAFSLFFLINLSRG. Residues 26 to 34 are Extracellular-facing; that stretch reads LSILLVFTK. The chain crosses the membrane as a helical span at residues 35–55; the sequence is NQLLALLLLSIVSLFSISLIS. The Cytoplasmic portion of the chain corresponds to 56-76; sequence ALIFFDLLPSTFFGFILLLFF.

The protein localises to the membrane. This chain is KANTR integral membrane protein, found in Mus musculus (Mouse).